The primary structure comprises 310 residues: Homoserine kinase (310 aa).

91-101 (PLARGLGSSAA) is an ATP binding site.

The protein belongs to the GHMP kinase family. Homoserine kinase subfamily.

The protein resides in the cytoplasm. The enzyme catalyses L-homoserine + ATP = O-phospho-L-homoserine + ADP + H(+). Its pathway is amino-acid biosynthesis; L-threonine biosynthesis; L-threonine from L-aspartate: step 4/5. Functionally, catalyzes the ATP-dependent phosphorylation of L-homoserine to L-homoserine phosphate. This is Homoserine kinase from Bacillus pumilus (strain SAFR-032).